A 161-amino-acid chain; its full sequence is Peroxynitrite isomerase 2 (161 aa).

A GXWXGXG motif is present at residues 17-23 (GTWTGRG). His-152 contributes to the heme b binding site.

The protein belongs to the nitrobindin family. As to quaternary structure, homodimer. Requires heme b as cofactor.

The enzyme catalyses peroxynitrite = nitrate. Its pathway is nitrogen metabolism. Its function is as follows. Heme-binding protein able to scavenge peroxynitrite and to protect free L-tyrosine against peroxynitrite-mediated nitration, by acting as a peroxynitrite isomerase that converts peroxynitrite to nitrate. Therefore, this protein likely plays a role in peroxynitrite sensing and in the detoxification of reactive nitrogen and oxygen species (RNS and ROS, respectively). Is able to bind nitric oxide (NO) in vitro, but may act as a sensor of peroxynitrite levels in vivo. This chain is Peroxynitrite isomerase 2, found in Mycobacterium avium (strain 104).